The following is a 341-amino-acid chain: MDHRELWPYGLRVLVIDDDCSYLSVMEDLLLKCSYKVTTYKNVREAVPFILDNPQIVDLVISDAFFPTEDGLLILQEVTSKFGIPTVIMASSGDTNTVMKYVANGAFDFLLKPVRIEELSNIWQHIFRKQMQDHKNNNMVGNLEKPGHPPSILAMARATPATTRSTATEASLAPLENEVRDDMVNYNGEITDIRDLGKSRLTWTTQLHRQFIAAVNHLGEDKAVPKKILGIMKVKHLTREQVASHLQKYRMQLKKSIPTTSKHGATLSSTALDKTQDHPSRSQYFNQDGCKEIMDYSLPRDDLSSGSECMLEELNDYSSEGFQDFRWDSDKQEYGPCFWNF.

The region spanning 12 to 127 (RVLVIDDDCS…ELSNIWQHIF (116 aa)) is the Response regulatory domain. Asp63 bears the 4-aspartylphosphate mark. In terms of domain architecture, HTH myb-type spans 195–254 (DLGKSRLTWTTQLHRQFIAAVNHLGEDKAVPKKILGIMKVKHLTREQVASHLQKYRMQLK). The segment at residues 225 to 250 (PKKILGIMKVKHLTREQVASHLQKYR) is a DNA-binding region (H-T-H motif).

Belongs to the ARR family. Type-B subfamily. Two-component system major event consists of a His-to-Asp phosphorelay between a sensor histidine kinase (HK) and a response regulator (RR). In plants, the His-to-Asp phosphorelay involves an additional intermediate named Histidine-containing phosphotransfer protein (HPt). This multistep phosphorelay consists of a His-Asp-His-Asp sequential transfer of a phosphate group between first a His and an Asp of the HK protein, followed by the transfer to a conserved His of the HPt protein and finally the transfer to an Asp in the receiver domain of the RR protein.

It localises to the nucleus. Its function is as follows. Transcriptional activator that acts as a floral inducer to promote short-day (SD) flowering pathway. Activates HD3A and other FT-like genes independently from HD1. May also activate MADS-box transcription factors involved in flowering regulation. Functions as a response regulator involved in His-to-Asp phosphorelay signal transduction system. Phosphorylation of the Asp residue in the receiver domain activates the ability of the protein to promote the transcription of target genes. May directly activate some type-A response regulators in response to cytokinins. This is Two-component response regulator ORR30 from Oryza sativa subsp. japonica (Rice).